The sequence spans 505 residues: ATP synthase subunit beta, mitochondrial (505 aa).

184–191 lines the ATP pocket; it reads GGAGVGKT.

It belongs to the ATPase alpha/beta chains family. As to quaternary structure, F-type ATPases have 2 components, CF(1) - the catalytic core - and CF(0) - the membrane proton channel. CF(1) has five subunits: alpha(3), beta(3), gamma(1), delta(1), epsilon(1). CF(0) has three main subunits: a, b and c.

The protein resides in the mitochondrion. The protein localises to the mitochondrion inner membrane. The enzyme catalyses ATP + H2O + 4 H(+)(in) = ADP + phosphate + 5 H(+)(out). Functionally, mitochondrial membrane ATP synthase (F(1)F(0) ATP synthase or Complex V) produces ATP from ADP in the presence of a proton gradient across the membrane which is generated by electron transport complexes of the respiratory chain. F-type ATPases consist of two structural domains, F(1) - containing the extramembraneous catalytic core, and F(0) - containing the membrane proton channel, linked together by a central stalk and a peripheral stalk. During catalysis, ATP synthesis in the catalytic domain of F(1) is coupled via a rotary mechanism of the central stalk subunits to proton translocation. Subunits alpha and beta form the catalytic core in F(1). Rotation of the central stalk against the surrounding alpha(3)beta(3) subunits leads to hydrolysis of ATP in three separate catalytic sites on the beta subunits. The polypeptide is ATP synthase subunit beta, mitochondrial (ATP2) (Kluyveromyces lactis (strain ATCC 8585 / CBS 2359 / DSM 70799 / NBRC 1267 / NRRL Y-1140 / WM37) (Yeast)).